Reading from the N-terminus, the 325-residue chain is Cytochrome c1, heme protein, mitochondrial (325 aa).

A mitochondrion-targeting transit peptide spans 1-84 (MAAAAASLRG…AMALHSAVSA (84 aa)). The Mitochondrial intermembrane segment spans residues 85-281 (SDLELHPPSY…TFLRWASEPE (197 aa)). A Cytochrome c domain is found at 108 to 209 (TSIRRGFQVY…IVRARHGGED (102 aa)). The heme c site is built by Cys121, Cys124, and His125. Ser182 is subject to Phosphoserine. A heme c-binding site is contributed by Met244. The chain crosses the membrane as a helical span at residues 282-315 (HDHRKRMGLKMLMMMALLVPLVYTIKRHKWSVLK). Residues 316-325 (SRKLAYRPPK) are Mitochondrial matrix-facing.

It belongs to the cytochrome c family. As to quaternary structure, component of the ubiquinol-cytochrome c oxidoreductase (cytochrome b-c1 complex, complex III, CIII), a multisubunit enzyme composed of 11 subunits. The complex is composed of 3 respiratory subunits cytochrome b, cytochrome c1 and Rieske protein UQCRFS1, 2 core protein subunits UQCRC1/QCR1 and UQCRC2/QCR2, and 6 low-molecular weight protein subunits UQCRH/QCR6, UQCRB/QCR7, UQCRQ/QCR8, UQCR10/QCR9, UQCR11/QCR10 and subunit 9, the cleavage product of Rieske protein UQCRFS1. The complex exists as an obligatory dimer and forms supercomplexes (SCs) in the inner mitochondrial membrane with NADH-ubiquinone oxidoreductase (complex I, CI) and cytochrome c oxidase (complex IV, CIV), resulting in different assemblies (supercomplex SCI(1)III(2)IV(1) and megacomplex MCI(2)III(2)IV(2)). Interacts with FLVCR2; this interaction occurs in the absence of heme and is disrupted upon heme binding. Heme c is required as a cofactor.

Its subcellular location is the mitochondrion inner membrane. The catalysed reaction is a quinol + 2 Fe(III)-[cytochrome c](out) = a quinone + 2 Fe(II)-[cytochrome c](out) + 2 H(+)(out). Its function is as follows. Component of the ubiquinol-cytochrome c oxidoreductase, a multisubunit transmembrane complex that is part of the mitochondrial electron transport chain which drives oxidative phosphorylation. The respiratory chain contains 3 multisubunit complexes succinate dehydrogenase (complex II, CII), ubiquinol-cytochrome c oxidoreductase (cytochrome b-c1 complex, complex III, CIII) and cytochrome c oxidase (complex IV, CIV), that cooperate to transfer electrons derived from NADH and succinate to molecular oxygen, creating an electrochemical gradient over the inner membrane that drives transmembrane transport and the ATP synthase. The cytochrome b-c1 complex catalyzes electron transfer from ubiquinol to cytochrome c, linking this redox reaction to translocation of protons across the mitochondrial inner membrane, with protons being carried across the membrane as hydrogens on the quinol. In the process called Q cycle, 2 protons are consumed from the matrix, 4 protons are released into the intermembrane space and 2 electrons are passed to cytochrome c. Cytochrome c1 is a catalytic core subunit containing a c-type heme. It transfers electrons from the [2Fe-2S] iron-sulfur cluster of the Rieske protein to cytochrome c. The sequence is that of Cytochrome c1, heme protein, mitochondrial (CYC1) from Homo sapiens (Human).